An 894-amino-acid chain; its full sequence is MNPGFDLSRRNPQEDFELIQRIGSGTYGDVYKARNVNTGELAAIKVIKLEPGEDFAVVQQEIIMMKDCKHPNIVAYFGSYLRRDKLWICMEFCGGGSLQDIYHVTGPLSELQIAYVSRETLQGLYYLHSKGKMHRDIKGANILLTDNGHVKLADFGVSAQITATIAKRKSFIGTPYWMAPEVAAVERKGGYNQLCDLWAVGITAIELAELQPPMFDLHPMRALFLMTKSNFQPPKLKDKMKWSNSFHHFVKMALTKNPKKRPTAEKLLQHPFVTQHLTRSLAIELLDKVNNPDHSTYHDFDDDDPEPLVAVPHRIHSTSRNVREEKTRSEITFGQVKFDPPLRKETEPHHELPDSDGFLDSSEEIYYTARSNLDLQLEYGQGHQGGYFLGANKSLLKSVEEELHQRGHVAHLEDDEGDDDESKHSTLKAKIPPPLPPKPKSIFIPQEMHSTEDENQGTIKRCPMSGSPAKPSQVPPRPPPPRLPPHKPVALGNGMSSFQLNGERDGSLCQQQNEHRGTNLSRKEKKDVPKPISNGLPPTPKVHMGACFSKVFNGCPLKIHCASSWINPDTRDQYLIFGAEEGIYTLNLNELHETSMEQLFPRRCTWLYVMNNCLLSISGKASQLYSHNLPGLFDYARQMQKLPVAIPAHKLPDRILPRKFSVSAKIPETKWCQKCCVVRNPYTGHKYLCGALQTSIVLLEWVEPMQKFMLIKHIDFPIPCPLRMFEMLVVPEQEYPLVCVGVSRGRDFNQVVRFETVNPNSTSSWFTESDTPQTNVTHVTQLERDTILVCLDCCIKIVNLQGRLKSSRKLSSELTFDFQIESIVCLQDSVLAFWKHGMQGRSFRSNEVTQEISDSTRIFRLLGSDRVVVLESRPTDNPTANSNLYILAGHENSY.

Met-1 carries the post-translational modification N-acetylmethionine. One can recognise a Protein kinase domain in the interval 16–273; it reads FELIQRIGSG…AEKLLQHPFV (258 aa). ATP is bound by residues 22–30, Lys-45, and Lys-48; that span reads IGSGTYGDV. Asp-136 (proton acceptor) is an active-site residue. Phosphoserine is present on residues Ser-329 and Ser-398. A disordered region spans residues 410–536; that stretch reads AHLEDDEGDD…DVPKPISNGL (127 aa). The segment covering 473–487 has biased composition (pro residues); that stretch reads QVPPRPPPPRLPPHK. Positions 513–529 are enriched in basic and acidic residues; it reads NEHRGTNLSRKEKKDVP. The CNH domain occupies 556–867; that stretch reads PLKIHCASSW…IFRLLGSDRV (312 aa).

The protein belongs to the protein kinase superfamily. STE Ser/Thr protein kinase family. STE20 subfamily. As to quaternary structure, interacts with SH3GL2. Interaction appears to regulate MAP4K3-mediated JNK activation. It depends on Mg(2+) as a cofactor. Ubiquitously expressed in all tissues examined, with high levels in heart, brain, placenta, skeletal muscle, kidney and pancreas and lower levels in lung and liver.

It carries out the reaction L-seryl-[protein] + ATP = O-phospho-L-seryl-[protein] + ADP + H(+). It catalyses the reaction L-threonyl-[protein] + ATP = O-phospho-L-threonyl-[protein] + ADP + H(+). Its function is as follows. Serine/threonine kinase that plays a role in the response to environmental stress. Appears to act upstream of the JUN N-terminal pathway. Activator of the Hippo signaling pathway which plays a pivotal role in organ size control and tumor suppression by restricting proliferation and promoting apoptosis. MAP4Ks act in parallel to and are partially redundant with STK3/MST2 and STK4/MST2 in the phosphorylation and activation of LATS1/2, and establish MAP4Ks as components of the expanded Hippo pathway. This chain is Mitogen-activated protein kinase kinase kinase kinase 3, found in Homo sapiens (Human).